The primary structure comprises 152 residues: Adenosine 5'-monophosphoramidase HNT1 (152 aa).

The HIT domain maps to 8–119 (IFCKIIKGEI…IPKKDEATGL (112 aa)). AMP is bound by residues 33–34 (DI), asparagine 93, 99–101 (HQV), and 106–108 (HFH). A Histidine triad motif motif is present at residues 104–108 (HVHFH). The Tele-AMP-histidine intermediate role is filled by histidine 106.

It belongs to the HINT family. As to quaternary structure, homodimer. It depends on Mg(2+) as a cofactor.

The enzyme catalyses adenosine 5'-phosphoramidate + H2O = AMP + NH4(+). Its function is as follows. Hydrolyzes adenosine 5'-monophosphoramidate substrates such as AMP-morpholidate, AMP-N-alanine methyl ester, AMP-alpha-acetyl lysine methyl ester and AMP-NH2. The chain is Adenosine 5'-monophosphoramidase HNT1 from Candida albicans (strain SC5314 / ATCC MYA-2876) (Yeast).